Here is a 208-residue protein sequence, read N- to C-terminus: Mediator of RNA polymerase II transcription subunit 18 (208 aa).

Ser66 is modified (phosphoserine).

This sequence belongs to the Mediator complex subunit 18 family. In terms of assembly, component of the Mediator complex, which is composed of MED1, MED4, MED6, MED7, MED8, MED9, MED10, MED11, MED12, MED13, MED13L, MED14, MED15, MED16, MED17, MED18, MED19, MED20, MED21, MED22, MED23, MED24, MED25, MED26, MED27, MED29, MED30, MED31, CCNC, CDK8 and CDC2L6/CDK11. The MED12, MED13, CCNC and CDK8 subunits form a distinct module termed the CDK8 module. Mediator containing the CDK8 module is less active than Mediator lacking this module in supporting transcriptional activation. Individual preparations of the Mediator complex lacking one or more distinct subunits have been variously termed ARC, CRSP, DRIP, PC2, SMCC and TRAP.

It localises to the nucleus. In terms of biological role, component of the Mediator complex, a coactivator involved in the regulated transcription of nearly all RNA polymerase II-dependent genes. Mediator functions as a bridge to convey information from gene-specific regulatory proteins to the basal RNA polymerase II transcription machinery. Mediator is recruited to promoters by direct interactions with regulatory proteins and serves as a scaffold for the assembly of a functional preinitiation complex with RNA polymerase II and the general transcription factors. This Bos taurus (Bovine) protein is Mediator of RNA polymerase II transcription subunit 18 (MED18).